A 351-amino-acid polypeptide reads, in one-letter code: DNA polymerase IV (351 aa).

Residues 4–184 (FIHIDMDCFY…LPLGKIPGVG (181 aa)) enclose the UmuC domain. Residues D8 and D102 each contribute to the Mg(2+) site. Residue E103 is part of the active site.

It belongs to the DNA polymerase type-Y family. Monomer. Requires Mg(2+) as cofactor.

It is found in the cytoplasm. The catalysed reaction is DNA(n) + a 2'-deoxyribonucleoside 5'-triphosphate = DNA(n+1) + diphosphate. Its function is as follows. Poorly processive, error-prone DNA polymerase involved in untargeted mutagenesis. Copies undamaged DNA at stalled replication forks, which arise in vivo from mismatched or misaligned primer ends. These misaligned primers can be extended by PolIV. Exhibits no 3'-5' exonuclease (proofreading) activity. May be involved in translesional synthesis, in conjunction with the beta clamp from PolIII. This Pseudoalteromonas translucida (strain TAC 125) protein is DNA polymerase IV.